Consider the following 204-residue polypeptide: Lipoprotein signal peptidase (204 aa).

The interval 1-42 is disordered; it reads MAEAERIIGTPDIPDAAGEGQERPDADPEREQQEQEQAPERT. Over residues 20–42 the composition is skewed to basic and acidic residues; that stretch reads GQERPDADPEREQQEQEQAPERT. The next 3 helical transmembrane spans lie at 50 to 70, 100 to 120, and 126 to 146; these read VLFAVALFAYLLDLGSKMLVV, FGEAFTIIFTVIAAAVIVVIA, and LHSLPWAIALGLLLGGALGNL. Catalysis depends on residues Asp-163 and Asp-177. Residues 170–190 form a helical membrane-spanning segment; sequence FAVFNLADSAIVCGGILIVIL.

It belongs to the peptidase A8 family.

Its subcellular location is the cell membrane. It carries out the reaction Release of signal peptides from bacterial membrane prolipoproteins. Hydrolyzes -Xaa-Yaa-Zaa-|-(S,diacylglyceryl)Cys-, in which Xaa is hydrophobic (preferably Leu), and Yaa (Ala or Ser) and Zaa (Gly or Ala) have small, neutral side chains.. It functions in the pathway protein modification; lipoprotein biosynthesis (signal peptide cleavage). Functionally, this protein specifically catalyzes the removal of signal peptides from prolipoproteins. The protein is Lipoprotein signal peptidase of Streptomyces coelicolor (strain ATCC BAA-471 / A3(2) / M145).